The sequence spans 264 residues: NAD-capped RNA hydrolase NudC (264 aa).

R70 provides a ligand contact to substrate. Positions 99 and 102 each coordinate Zn(2+). E112 serves as a coordination point for substrate. Positions 117 and 122 each coordinate Zn(2+). Y127 is a substrate binding site. In terms of domain architecture, Nudix hydrolase spans P128–T257. A divalent metal cation-binding residues include A166, E182, and E186. The Nudix box signature appears at G167–G188. Q200–S207 is a substrate binding site. Position 227 (E227) interacts with a divalent metal cation. Residue A250 coordinates substrate.

The protein belongs to the Nudix hydrolase family. NudC subfamily. As to quaternary structure, homodimer. Requires Mg(2+) as cofactor. Mn(2+) serves as cofactor. The cofactor is Zn(2+).

The enzyme catalyses a 5'-end NAD(+)-phospho-ribonucleoside in mRNA + H2O = a 5'-end phospho-adenosine-phospho-ribonucleoside in mRNA + beta-nicotinamide D-ribonucleotide + 2 H(+). It carries out the reaction NAD(+) + H2O = beta-nicotinamide D-ribonucleotide + AMP + 2 H(+). It catalyses the reaction NADH + H2O = reduced beta-nicotinamide D-ribonucleotide + AMP + 2 H(+). In terms of biological role, mRNA decapping enzyme that specifically removes the nicotinamide adenine dinucleotide (NAD) cap from a subset of mRNAs by hydrolyzing the diphosphate linkage to produce nicotinamide mononucleotide (NMN) and 5' monophosphate mRNA. The NAD-cap is present at the 5'-end of some mRNAs and stabilizes RNA against 5'-processing. Has preference for mRNAs with a 5'-end purine. Catalyzes the hydrolysis of a broad range of dinucleotide pyrophosphates. This is NAD-capped RNA hydrolase NudC from Actinobacillus succinogenes (strain ATCC 55618 / DSM 22257 / CCUG 43843 / 130Z).